We begin with the raw amino-acid sequence, 150 residues long: uncharacterized protein (150 aa).

3 helical membrane-spanning segments follow: residues 48–68 (LFLL…CFLF), 89–109 (VFIF…YLLP), and 123–143 (REVF…IFTL).

It to M.pneumoniae MPN_085 central region.

The protein localises to the cell membrane. This is an uncharacterized protein from Mycoplasma pneumoniae (strain ATCC 29342 / M129 / Subtype 1) (Mycoplasmoides pneumoniae).